The chain runs to 436 residues: GTPase Der (436 aa).

2 EngA-type G domains span residues 4-167 (PTVA…PNEI) and 175-351 (IKFS…HAQN). Residues 10 to 17 (GRPNVGKS), 57 to 61 (DTGGI), 119 to 122 (NKVD), 181 to 188 (GRPNVGKS), 229 to 233 (DTAGM), and 294 to 297 (NKWD) each bind GTP. Residues 352–436 (LRISSSVLND…PVHLIARKRK (85 aa)) enclose the KH-like domain.

Belongs to the TRAFAC class TrmE-Era-EngA-EngB-Septin-like GTPase superfamily. EngA (Der) GTPase family. In terms of assembly, associates with the 50S ribosomal subunit.

GTPase that plays an essential role in the late steps of ribosome biogenesis. The sequence is that of GTPase Der from Lactococcus lactis subsp. lactis (strain IL1403) (Streptococcus lactis).